A 186-amino-acid chain; its full sequence is Probable chorismate pyruvate-lyase (186 aa).

Residues arginine 80, leucine 118, and glutamate 170 each coordinate substrate.

This sequence belongs to the UbiC family.

The protein resides in the cytoplasm. The catalysed reaction is chorismate = 4-hydroxybenzoate + pyruvate. It participates in cofactor biosynthesis; ubiquinone biosynthesis. In terms of biological role, removes the pyruvyl group from chorismate, with concomitant aromatization of the ring, to provide 4-hydroxybenzoate (4HB) for the ubiquinone pathway. This is Probable chorismate pyruvate-lyase from Pseudomonas savastanoi pv. phaseolicola (strain 1448A / Race 6) (Pseudomonas syringae pv. phaseolicola (strain 1448A / Race 6)).